Here is a 139-residue protein sequence, read N- to C-terminus: Nucleoside diphosphate kinase (139 aa).

Residues Lys-10, Phe-58, Arg-86, Thr-92, Arg-103, and Asn-113 each contribute to the ATP site. His-116 (pros-phosphohistidine intermediate) is an active-site residue.

Belongs to the NDK family. In terms of assembly, homotetramer. Mg(2+) serves as cofactor.

It localises to the cytoplasm. It carries out the reaction a 2'-deoxyribonucleoside 5'-diphosphate + ATP = a 2'-deoxyribonucleoside 5'-triphosphate + ADP. It catalyses the reaction a ribonucleoside 5'-diphosphate + ATP = a ribonucleoside 5'-triphosphate + ADP. Its function is as follows. Major role in the synthesis of nucleoside triphosphates other than ATP. The ATP gamma phosphate is transferred to the NDP beta phosphate via a ping-pong mechanism, using a phosphorylated active-site intermediate. This is Nucleoside diphosphate kinase from Desulfovibrio desulfuricans (strain ATCC 27774 / DSM 6949 / MB).